We begin with the raw amino-acid sequence, 252 residues long: Probable anguibactin biosynthesis thioesterase AngT (252 aa).

Residues Ser92 and His229 contribute to the active site.

The protein belongs to the thioesterase family.

The protein operates within siderophore biosynthesis; anguibactin biosynthesis. Functionally, probable thioesterase. Involved in anguibactin production, but is not essential for virulence or iron transport gene expression. The protein is Probable anguibactin biosynthesis thioesterase AngT (angT) of Vibrio anguillarum (strain ATCC 68554 / 775) (Listonella anguillarum).